A 95-amino-acid chain; its full sequence is MKNIYGVLKGPVLTEKAAILQEIDGQVVFKVHPKSNKIEIKRAIELMFDVKVKDVRTASMRGKEKRVGKTVGQTKEWKKAYVSLAEGEINFTDEI.

It belongs to the universal ribosomal protein uL23 family. Part of the 50S ribosomal subunit. Contacts protein L29, and trigger factor when it is bound to the ribosome.

Functionally, one of the early assembly proteins it binds 23S rRNA. One of the proteins that surrounds the polypeptide exit tunnel on the outside of the ribosome. Forms the main docking site for trigger factor binding to the ribosome. The protein is Large ribosomal subunit protein uL23 of Desulfotalea psychrophila (strain LSv54 / DSM 12343).